A 131-amino-acid polypeptide reads, in one-letter code: Two-component response regulator ORR3 (131 aa).

The 118-residue stretch at 12–129 (HVLAVDDSIV…DVSRLCNRVI (118 aa)) folds into the Response regulatory domain. Asp-62 carries the post-translational modification 4-aspartylphosphate.

This sequence belongs to the ARR family. Type-A subfamily. Post-translationally, two-component system major event consists of a His-to-Asp phosphorelay between a sensor histidine kinase (HK) and a response regulator (RR). In plants, the His-to-Asp phosphorelay involves an additional intermediate named Histidine-containing phosphotransfer protein (HPt). This multistep phosphorelay consists of a His-Asp-His-Asp sequential transfer of a phosphate group between first a His and an Asp of the HK protein, followed by the transfer to a conserved His of the HPt protein and finally the transfer to an Asp in the receiver domain of the RR protein. As to expression, expressed in roots, mature leaves and flowers, and at low levels in shoots.

Its function is as follows. Functions as a response regulator involved in His-to-Asp phosphorelay signal transduction system. Phosphorylation of the Asp residue in the receiver domain activates the ability of the protein to promote the transcription of target genes. Type-A response regulators seem to act as negative regulators of the cytokinin signaling. The sequence is that of Two-component response regulator ORR3 from Oryza sativa subsp. indica (Rice).